Reading from the N-terminus, the 169-residue chain is Disulfide bond formation protein B (169 aa).

The Cytoplasmic portion of the chain corresponds to 1-13 (MSQLQQFCHNRFS). Residues 14-30 (WGLLLLSAIGLELAALF) traverse the membrane as a helical segment. Residues 31–48 (FQYGMDLAPCVMCIYIRV) lie on the Periplasmic side of the membrane. The cysteines at positions 40 and 43 are disulfide-linked. A helical transmembrane segment spans residues 49–64 (AVLGIILAALIGILQP). The Cytoplasmic segment spans residues 65 to 71 (KVWLLRL). A helical transmembrane segment spans residues 72-89 (VGMAGWAVSAVWGFKLAY). The Periplasmic segment spans residues 90-144 (ELNQMQVNPSPFATCSFYPEFPSFMPLDTWLPSVFSPTGMCSDSPWSWLSVSMAQ). Cys-104 and Cys-130 are oxidised to a cystine. Residues 145–163 (WMMLGFAIYGVIWLLMLLP) form a helical membrane-spanning segment. Over 164–169 (ALKSAK) the chain is Cytoplasmic.

The protein belongs to the DsbB family.

The protein localises to the cell inner membrane. Required for disulfide bond formation in some periplasmic proteins. Acts by oxidizing the DsbA protein. The polypeptide is Disulfide bond formation protein B (Shewanella frigidimarina (strain NCIMB 400)).